Consider the following 158-residue polypeptide: Transcription elongation factor GreA (158 aa).

A coiled-coil region spans residues 45-72 (AEYHAAREQQSFIEGRIKQLEGELSHAE).

This sequence belongs to the GreA/GreB family.

Necessary for efficient RNA polymerase transcription elongation past template-encoded arresting sites. The arresting sites in DNA have the property of trapping a certain fraction of elongating RNA polymerases that pass through, resulting in locked ternary complexes. Cleavage of the nascent transcript by cleavage factors such as GreA or GreB allows the resumption of elongation from the new 3'terminus. GreA releases sequences of 2 to 3 nucleotides. The protein is Transcription elongation factor GreA of Xylella fastidiosa (strain M23).